Here is a 353-residue protein sequence, read N- to C-terminus: Photosystem II protein D1 (353 aa).

At T2 the chain carries N-acetylthreonine. Residue T2 is modified to Phosphothreonine. The next 3 helical transmembrane spans lie at 29–46 (YIGW…TATS), 118–133 (HFFL…EWEL), and 142–156 (WIAV…AATA). Chlorophyll a is bound at residue H118. A pheophytin a-binding site is contributed by Y126. [CaMn4O5] cluster-binding residues include D170 and E189. Residues 197–218 (FHMLGVAGVFGGSLFSAMHGSL) form a helical membrane-spanning segment. A chlorophyll a-binding site is contributed by H198. A quinone contacts are provided by residues H215 and 264 to 265 (SF). H215 contributes to the Fe cation binding site. H272 contributes to the Fe cation binding site. Residues 274–288 (FLAAWPVVGIWFTAL) form a helical membrane-spanning segment. H332, E333, D342, and A344 together coordinate [CaMn4O5] cluster. Residues 345–353 (SVEAPSVNA) constitute a propeptide that is removed on maturation.

It belongs to the reaction center PufL/M/PsbA/D family. As to quaternary structure, PSII is composed of 1 copy each of membrane proteins PsbA, PsbB, PsbC, PsbD, PsbE, PsbF, PsbH, PsbI, PsbJ, PsbK, PsbL, PsbM, PsbT, PsbX, PsbY, PsbZ, Psb30/Ycf12, at least 3 peripheral proteins of the oxygen-evolving complex and a large number of cofactors. It forms dimeric complexes. The cofactor is The D1/D2 heterodimer binds P680, chlorophylls that are the primary electron donor of PSII, and subsequent electron acceptors. It shares a non-heme iron and each subunit binds pheophytin, quinone, additional chlorophylls, carotenoids and lipids. D1 provides most of the ligands for the Mn4-Ca-O5 cluster of the oxygen-evolving complex (OEC). There is also a Cl(-1) ion associated with D1 and D2, which is required for oxygen evolution. The PSII complex binds additional chlorophylls, carotenoids and specific lipids.. Post-translationally, the 9 C-terminal residues are removed, probably by CTPA (AC O04073); processing is essential to allow assembly of the oxygen-evolving complex and thus photosynthetic growth. In terms of processing, tyr-161 forms a radical intermediate that is referred to as redox-active TyrZ, YZ or Y-Z.

It localises to the plastid. Its subcellular location is the chloroplast thylakoid membrane. The catalysed reaction is 2 a plastoquinone + 4 hnu + 2 H2O = 2 a plastoquinol + O2. Functionally, photosystem II (PSII) is a light-driven water:plastoquinone oxidoreductase that uses light energy to abstract electrons from H(2)O, generating O(2) and a proton gradient subsequently used for ATP formation. It consists of a core antenna complex that captures photons, and an electron transfer chain that converts photonic excitation into a charge separation. The D1/D2 (PsbA/PsbD) reaction center heterodimer binds P680, the primary electron donor of PSII as well as several subsequent electron acceptors. The protein is Photosystem II protein D1 of Tetradesmus obliquus (Green alga).